We begin with the raw amino-acid sequence, 430 residues long: Glutamyl-tRNA reductase (430 aa).

Residues 50–53 (TCNR), Ser-108, 113–115 (EPQ), and Gln-119 each bind substrate. Cys-51 acts as the Nucleophile in catalysis. An NADP(+)-binding site is contributed by 188 to 193 (GAGEMA).

Belongs to the glutamyl-tRNA reductase family. Homodimer.

The enzyme catalyses (S)-4-amino-5-oxopentanoate + tRNA(Glu) + NADP(+) = L-glutamyl-tRNA(Glu) + NADPH + H(+). The protein operates within porphyrin-containing compound metabolism; protoporphyrin-IX biosynthesis; 5-aminolevulinate from L-glutamyl-tRNA(Glu): step 1/2. In terms of biological role, catalyzes the NADPH-dependent reduction of glutamyl-tRNA(Glu) to glutamate 1-semialdehyde (GSA). This chain is Glutamyl-tRNA reductase, found in Desulfovibrio desulfuricans (strain ATCC 27774 / DSM 6949 / MB).